Reading from the N-terminus, the 525-residue chain is GMP synthase [glutamine-hydrolyzing] (525 aa).

The region spanning R9–L207 is the Glutamine amidotransferase type-1 domain. The Nucleophile role is filled by C86. Active-site residues include H181 and E183. The 193-residue stretch at W208–R400 folds into the GMPS ATP-PPase domain. Position 235–241 (S235–S241) interacts with ATP.

Homodimer.

It carries out the reaction XMP + L-glutamine + ATP + H2O = GMP + L-glutamate + AMP + diphosphate + 2 H(+). Its pathway is purine metabolism; GMP biosynthesis; GMP from XMP (L-Gln route): step 1/1. Catalyzes the synthesis of GMP from XMP. This is GMP synthase [glutamine-hydrolyzing] from Citrobacter koseri (strain ATCC BAA-895 / CDC 4225-83 / SGSC4696).